The chain runs to 442 residues: Threonine/serine transporter TdcC (442 aa).

Helical transmembrane passes span 21–41, 44–64, 96–116, 139–159, 162–182, 206–226, 258–278, 312–332, 364–384, 388–408, and 422–442; these read TTWT…FFPI, GFGG…IAFL, GVVI…IYGV, VVAL…KDLM, VMSF…LSLI, ILVT…FSPI, ASIL…FTLS, ITLE…SFFG, LISM…NPNI, IEAM…MYAI, and ENYF…YKLL.

The protein belongs to the amino acid/polyamine transporter 2 family. SdaC/TdcC subfamily.

It is found in the cell inner membrane. The enzyme catalyses L-threonine(in) + H(+)(in) = L-threonine(out) + H(+)(out). The catalysed reaction is L-serine(in) + H(+)(in) = L-serine(out) + H(+)(out). Functionally, involved in the import of threonine and serine into the cell, with the concomitant import of a proton (symport system). In Yersinia enterocolitica serotype O:8 / biotype 1B (strain NCTC 13174 / 8081), this protein is Threonine/serine transporter TdcC.